Consider the following 1342-residue polypeptide: DNA-directed RNA polymerase subunit beta (1342 aa).

N6-acetyllysine occurs at positions 1022 and 1200.

The protein belongs to the RNA polymerase beta chain family. The RNAP catalytic core consists of 2 alpha, 1 beta, 1 beta' and 1 omega subunit. When a sigma factor is associated with the core the holoenzyme is formed, which can initiate transcription.

The enzyme catalyses RNA(n) + a ribonucleoside 5'-triphosphate = RNA(n+1) + diphosphate. Its function is as follows. DNA-dependent RNA polymerase catalyzes the transcription of DNA into RNA using the four ribonucleoside triphosphates as substrates. The sequence is that of DNA-directed RNA polymerase subunit beta from Shigella flexneri serotype 5b (strain 8401).